The sequence spans 387 residues: Norsolorinic acid reductase stcV (387 aa).

Residue Asp-69 participates in NADP(+) binding. Tyr-74 acts as the Proton donor in catalysis. Residue His-148 participates in substrate binding. Residues Ser-178–Asp-179, Gln-204, Gly-233–Ala-243, and Arg-301–Asn-309 each bind NADP(+).

The protein belongs to the aldo/keto reductase family. Aldo/keto reductase 2 subfamily.

It functions in the pathway mycotoxin biosynthesis; sterigmatocystin biosynthesis. In terms of biological role, norsolorinic acid reductase; part of the gene cluster that mediates the biosynthesis of sterigmatocystin (ST), a polyketide-derived furanocoumarin which is part of the most toxic and carcinogenic compounds among the known mycotoxins. The first step in the biosynthesis of sterigmatocystin is the production of hexanoate by the fatty acid synthase (FAS) units stcJ and stcK. The polyketide backbone is assembled by the non-reducing polyketide synthase stcA by condensation of the starter hexanoyl-CoA and 7 malonyl-CoA extender units followed by cyclization and release of norsolorinic acid. Norsolorinic acid is the first stable intermediate in the biosynthesis of sterigmatocystin and is converted into averantin (AVN) by the ketoreductase stcE which reduces the hexanoate ketone to an alcohol. Averantin is then oxidized into 5'-hydroxyaverantin (HAVN) by the cytochrome P450 monooxygenase stcF. 5'-hydroxyaverantin is further converted to 5'-oxyaverantin (OAVN) by the 5'-hydroxyaverantin dehydrogenase stcG. The next step is the conversion of OAVN into averufin (AVF) which is catalyzed by a yet to be identified enzyme. The cytochrome P450 monooxygenase stcB and the flavin-binding monooxygenase stcW are both required for the conversion of averufin to 1-hydroxyversicolorone. The esterase stcI probably catalyzes the formation of versiconal hemiacetal acetate from 1-hydroxyversicolorone. The oxydoreductase stcN then probably catalyzes the biosynthetic step from versiconal to versicolorin B (VERB). The next step is performed by the versicolorin B desaturase stcL to produce versicolorin A (VERA). The ketoreductase stcU and the cytochrome P450 monooxygenase stcS are involved in the conversion of versicolorin A to demethylsterigmatocystin. The Baeyer-Villiger oxidas stcQ and the reductase stcR might be involved in the biosynthetic step from versicolorin A to demethylsterigmatocystin. The final step in the biosynthesis of sterigmatocystin is the methylation of demethylsterigmatocystin catalyzed by the methyltransferase stcP. This Emericella nidulans (strain FGSC A4 / ATCC 38163 / CBS 112.46 / NRRL 194 / M139) (Aspergillus nidulans) protein is Norsolorinic acid reductase stcV.